Consider the following 228-residue polypeptide: Uridylate kinase (228 aa).

ATP is bound at residue 9-10 (GS). G44 lines the UMP pocket. ATP-binding residues include G45 and R49. UMP-binding positions include D66 and 114–120 (IVAAQTT). 3 residues coordinate ATP: T140, Y146, and D149.

Belongs to the UMP kinase family. In terms of assembly, homohexamer.

It is found in the cytoplasm. The enzyme catalyses UMP + ATP = UDP + ADP. Its pathway is pyrimidine metabolism; CTP biosynthesis via de novo pathway; UDP from UMP (UMPK route): step 1/1. Inhibited by UTP. Functionally, catalyzes the reversible phosphorylation of UMP to UDP. The chain is Uridylate kinase from Haloarcula marismortui (strain ATCC 43049 / DSM 3752 / JCM 8966 / VKM B-1809) (Halobacterium marismortui).